The primary structure comprises 483 residues: MSGGGPSGGGPGGSGRARTSSFAEPGGGGGGGGGGPGGSASGPGGTGGGKASVGAMGGGVGASSSGGGPGGSGGGGSGGPGAGTSFPPPGVKLGRDSGKVTTVVATLGQGPERSQEVAYTDIKVIGNGSFGVVYQARLAETRELVAIKKVLQDKRFKNRELQIMRKLDHCNIVRLRYFFYSSGEKKDELYLNLVLEYVPETVYRVARHFTKAKLTIPILYVKVYMYQLFRSLAYIHSQGVCHRDIKPQNLLVDPDTAVLKLCDFGSAKQLVRGEPNVSYICSRYYRAPELIFGATDYTSSIDVWSAGCVLAELLLGQPIFPGDSGVDQLVEIIKVLGTPTREQIREMNPNYTEFKFPQIKAHPWTKVFKSRTPPEAIALCSSLLEYTPSSRLSPLEACAHSFFDELRCLGTQLPNNRPLPPLFNFSAGELSIQPSLNAILIPPHLRSPAGTTTLTPSSQALTETPTSSDWQSTDATPTLTNSS.

Residues 1 to 15 show a composition bias toward gly residues; the sequence is MSGGGPSGGGPGGSG. Residues 1–96 are disordered; that stretch reads MSGGGPSGGG…PPPGVKLGRD (96 aa). Serine 2 is modified (N-acetylserine). Position 2 is a phosphoserine (serine 2). Serine 21 is modified (phosphoserine; by PKB/AKT1). The segment covering 25–82 has biased composition (gly residues); that stretch reads PGGGGGGGGGGPGGSASGPGGTGGGKASVGAMGGGVGASSSGGGPGGSGGGGSGGPGA. Residues serine 72, serine 77, and serine 97 each carry the phosphoserine modification. The Protein kinase domain occupies 119–403; sequence YTDIKVIGNG…PLEACAHSFF (285 aa). ATP contacts are provided by residues 125–133 and lysine 148; that span reads IGNGSFGVV. The Proton acceptor role is filled by aspartate 244. The residue at position 279 (tyrosine 279) is a Phosphotyrosine. The disordered stretch occupies residues 449-483; that stretch reads AGTTTLTPSSQALTETPTSSDWQSTDATPTLTNSS.

The protein belongs to the protein kinase superfamily. CMGC Ser/Thr protein kinase family. GSK-3 subfamily. In terms of assembly, monomer. Interacts with ARRB2. Interacts with AXIN1 and CTNNB1/beta-catenin. Interacts with CTNND2. Interacts with LMBR1L. Interacts with DDX3X. Interacts with TNFRSF10B. Interacts with RICTOR; the interaction results in phosphorylation of RICTOR at 'Thr-1695' by GSK3A which facilitates FBXW7-mediated ubiquitination and subsequent degradation of RICTOR. (Microbial infection) Interacts with M.tuberculosis PtpA. In terms of processing, phosphorylated by AKT1 at Ser-21: upon insulin-mediated signaling, the activated PKB/AKT1 protein kinase phosphorylates and deactivates GSK3A, resulting in the dephosphorylation and activation of GYS1. Activated by phosphorylation at Tyr-279. Post-translationally, (Microbial infection) Dephosphorylated at Tyr-279 by M.tuberculosis PtpA, which leads to prevention of apoptosis during early stages of microbial infection.

The catalysed reaction is L-seryl-[tau protein] + ATP = O-phospho-L-seryl-[tau protein] + ADP + H(+). It catalyses the reaction L-threonyl-[tau protein] + ATP = O-phospho-L-threonyl-[tau protein] + ADP + H(+). It carries out the reaction L-seryl-[protein] + ATP = O-phospho-L-seryl-[protein] + ADP + H(+). The enzyme catalyses L-threonyl-[protein] + ATP = O-phospho-L-threonyl-[protein] + ADP + H(+). Activated by phosphorylation at Tyr-279. In response to insulin, inhibited by phosphorylation at Ser-21 by PKB/AKT1; phosphorylation at this site causes a conformational change, preventing access of substrates to the active site. Inhibited by lithium. Functionally, constitutively active protein kinase that acts as a negative regulator in the hormonal control of glucose homeostasis, Wnt signaling and regulation of transcription factors and microtubules, by phosphorylating and inactivating glycogen synthase (GYS1 or GYS2), CTNNB1/beta-catenin, APC and AXIN1. Requires primed phosphorylation of the majority of its substrates. Contributes to insulin regulation of glycogen synthesis by phosphorylating and inhibiting GYS1 activity and hence glycogen synthesis. Regulates glycogen metabolism in liver, but not in muscle. May also mediate the development of insulin resistance by regulating activation of transcription factors. In Wnt signaling, regulates the level and transcriptional activity of nuclear CTNNB1/beta-catenin. Facilitates amyloid precursor protein (APP) processing and the generation of APP-derived amyloid plaques found in Alzheimer disease. May be involved in the regulation of replication in pancreatic beta-cells. Is necessary for the establishment of neuronal polarity and axon outgrowth. Through phosphorylation of the anti-apoptotic protein MCL1, may control cell apoptosis in response to growth factors deprivation. Acts as a regulator of autophagy by mediating phosphorylation of KAT5/TIP60 under starvation conditions which activates KAT5/TIP60 acetyltransferase activity and promotes acetylation of key autophagy regulators, such as ULK1 and RUBCNL/Pacer. Negatively regulates extrinsic apoptotic signaling pathway via death domain receptors. Promotes the formation of an anti-apoptotic complex, made of DDX3X, BRIC2 and GSK3B, at death receptors, including TNFRSF10B. The anti-apoptotic function is most effective with weak apoptotic signals and can be overcome by stronger stimulation. Phosphorylates mTORC2 complex component RICTOR at 'Thr-1695' which facilitates FBXW7-mediated ubiquitination and subsequent degradation of RICTOR. The chain is Glycogen synthase kinase-3 alpha (GSK3A) from Homo sapiens (Human).